The sequence spans 176 residues: ATP-dependent protease subunit HslV (176 aa).

Threonine 2 is a catalytic residue. Glycine 157, cysteine 160, and threonine 163 together coordinate Na(+).

Belongs to the peptidase T1B family. HslV subfamily. In terms of assembly, a double ring-shaped homohexamer of HslV is capped on each side by a ring-shaped HslU homohexamer. The assembly of the HslU/HslV complex is dependent on binding of ATP.

It localises to the cytoplasm. It carries out the reaction ATP-dependent cleavage of peptide bonds with broad specificity.. With respect to regulation, allosterically activated by HslU binding. Its function is as follows. Protease subunit of a proteasome-like degradation complex believed to be a general protein degrading machinery. The polypeptide is ATP-dependent protease subunit HslV (Klebsiella pneumoniae (strain 342)).